The chain runs to 147 residues: Ribosome-binding factor A (147 aa).

The segment at 126-147 (LKKNAQPAGDAHPYKDDDAMND) is disordered. Residues 137-147 (HPYKDDDAMND) show a composition bias toward basic and acidic residues.

This sequence belongs to the RbfA family. Monomer. Binds 30S ribosomal subunits, but not 50S ribosomal subunits or 70S ribosomes.

It localises to the cytoplasm. Functionally, one of several proteins that assist in the late maturation steps of the functional core of the 30S ribosomal subunit. Associates with free 30S ribosomal subunits (but not with 30S subunits that are part of 70S ribosomes or polysomes). Required for efficient processing of 16S rRNA. May interact with the 5'-terminal helix region of 16S rRNA. The chain is Ribosome-binding factor A from Corynebacterium diphtheriae (strain ATCC 700971 / NCTC 13129 / Biotype gravis).